A 105-amino-acid chain; its full sequence is Defensin-like protein 106 (105 aa).

Positions 1 to 24 are cleaved as a signal peptide; the sequence is MANTPKTLIAFVFSVIVIISYVHC. 4 disulfides stabilise this stretch: cysteine 57/cysteine 94, cysteine 63/cysteine 87, cysteine 73/cysteine 92, and cysteine 77/cysteine 93.

It belongs to the DEFL family.

Its subcellular location is the secreted. The chain is Defensin-like protein 106 from Arabidopsis thaliana (Mouse-ear cress).